The following is a 283-amino-acid chain: Homeobox protein Hox-A9a (283 aa).

Disordered stretches follow at residues 25 to 54 (VPRY…GTCS) and 162 to 181 (EKDA…EKPG). The segment at residues 216 to 275 (TRKKRCPYTKHQILELEKEFLFNTYLTRDRRYEVARLLNLTERQVKIWFQNRRMKMKKFN) is a DNA-binding region (homeobox).

It belongs to the Abd-B homeobox family.

It is found in the nucleus. Its function is as follows. Sequence-specific transcription factor which is part of a developmental regulatory system that provides cells with specific positional identities on the anterior-posterior axis. This chain is Homeobox protein Hox-A9a (hoxa9a), found in Takifugu rubripes (Japanese pufferfish).